The primary structure comprises 250 residues: ATP synthase subunit a (250 aa).

The next 6 helical transmembrane spans lie at 27-47 (FTNA…FLTF), 85-105 (FFPL…VGLI), 115-135 (LIVT…YGFV), 141-161 (FLHL…LVVI), 181-201 (MLAG…LASA), and 223-243 (ELLV…IYLN).

The protein belongs to the ATPase A chain family. F-type ATPases have 2 components, CF(1) - the catalytic core - and CF(0) - the membrane proton channel. CF(1) has five subunits: alpha(3), beta(3), gamma(1), delta(1), epsilon(1). CF(0) has three main subunits: a(1), b(2) and c(9-12). The alpha and beta chains form an alternating ring which encloses part of the gamma chain. CF(1) is attached to CF(0) by a central stalk formed by the gamma and epsilon chains, while a peripheral stalk is formed by the delta and b chains.

It localises to the cell inner membrane. In terms of biological role, key component of the proton channel; it plays a direct role in the translocation of protons across the membrane. The sequence is that of ATP synthase subunit a from Xanthobacter autotrophicus (strain ATCC BAA-1158 / Py2).